The primary structure comprises 66 residues: Protein translocase subunit SecE (66 aa).

Residues 29–49 (LVASTLVVVVAVFIFSPICLV) form a helical membrane-spanning segment.

Belongs to the SecE/SEC61-gamma family. Component of the Sec protein translocase complex. Heterotrimer consisting of SecY, SecE and SecG subunits. The heterotrimers can form oligomers, although 1 heterotrimer is thought to be able to translocate proteins. Interacts with the ribosome. Interacts with SecDF, and other proteins may be involved. Interacts with SecA.

The protein resides in the cell inner membrane. Functionally, essential subunit of the Sec protein translocation channel SecYEG. Clamps together the 2 halves of SecY. May contact the channel plug during translocation. This Rickettsia montanensis protein is Protein translocase subunit SecE.